The following is an 82-amino-acid chain: Small ribosomal subunit protein bS16 (82 aa).

Belongs to the bacterial ribosomal protein bS16 family.

In Gloeothece citriformis (strain PCC 7424) (Cyanothece sp. (strain PCC 7424)), this protein is Small ribosomal subunit protein bS16.